A 500-amino-acid polypeptide reads, in one-letter code: Glycerol kinase (500 aa).

Residue Thr-12 coordinates ADP. ATP is bound by residues Thr-12, Thr-13, and Ser-14. Residue Thr-12 participates in sn-glycerol 3-phosphate binding. Residue Arg-16 participates in ADP binding. Sn-glycerol 3-phosphate contacts are provided by Arg-82, Glu-83, Tyr-134, and Asp-244. The glycerol site is built by Arg-82, Glu-83, Tyr-134, Asp-244, and Gln-245. ADP is bound by residues Thr-266 and Gly-309. 4 residues coordinate ATP: Thr-266, Gly-309, Gln-313, and Gly-410. Residues Gly-410 and Asn-414 each contribute to the ADP site.

It belongs to the FGGY kinase family. As to quaternary structure, homotetramer and homodimer (in equilibrium).

The enzyme catalyses glycerol + ATP = sn-glycerol 3-phosphate + ADP + H(+). It participates in polyol metabolism; glycerol degradation via glycerol kinase pathway; sn-glycerol 3-phosphate from glycerol: step 1/1. With respect to regulation, activated by phosphorylation and inhibited by fructose 1,6-bisphosphate (FBP). In terms of biological role, key enzyme in the regulation of glycerol uptake and metabolism. Catalyzes the phosphorylation of glycerol to yield sn-glycerol 3-phosphate. This Alkaliphilus metalliredigens (strain QYMF) protein is Glycerol kinase.